Here is a 63-residue protein sequence, read N- to C-terminus: Large ribosomal subunit protein bL28 (63 aa).

It belongs to the bacterial ribosomal protein bL28 family.

This chain is Large ribosomal subunit protein bL28, found in Brachyspira hyodysenteriae (strain ATCC 49526 / WA1).